The following is a 198-amino-acid chain: FMN-dependent NADH:quinone oxidoreductase (198 aa).

Residues serine 10, 16–18 (SQS), 94–97 (MYNF), and 138–141 (TRGG) contribute to the FMN site.

It belongs to the azoreductase type 1 family. Homodimer. The cofactor is FMN.

It catalyses the reaction 2 a quinone + NADH + H(+) = 2 a 1,4-benzosemiquinone + NAD(+). It carries out the reaction N,N-dimethyl-1,4-phenylenediamine + anthranilate + 2 NAD(+) = 2-(4-dimethylaminophenyl)diazenylbenzoate + 2 NADH + 2 H(+). Quinone reductase that provides resistance to thiol-specific stress caused by electrophilic quinones. In terms of biological role, also exhibits azoreductase activity. Catalyzes the reductive cleavage of the azo bond in aromatic azo compounds to the corresponding amines. The polypeptide is FMN-dependent NADH:quinone oxidoreductase (Shewanella sp. (strain MR-4)).